We begin with the raw amino-acid sequence, 360 residues long: D-alanine--D-alanine ligase (360 aa).

Residues 146-352 (KLCAVQAGIH…FTELIDRLVR (207 aa)) enclose the ATP-grasp domain. 179-234 (KKRFAPPFFVKPANLGSSVGIAKIHSFDELENALDEACRLDVKILVEKAIEGREVE) provides a ligand contact to ATP. D305, E319, and N321 together coordinate Mg(2+).

The protein belongs to the D-alanine--D-alanine ligase family. Requires Mg(2+) as cofactor. Mn(2+) is required as a cofactor.

The protein localises to the cytoplasm. The enzyme catalyses 2 D-alanine + ATP = D-alanyl-D-alanine + ADP + phosphate + H(+). The protein operates within cell wall biogenesis; peptidoglycan biosynthesis. Cell wall formation. This Chlorobium phaeobacteroides (strain BS1) protein is D-alanine--D-alanine ligase.